A 424-amino-acid chain; its full sequence is UDP-N-acetylglucosamine 1-carboxyvinyltransferase (424 aa).

A phosphoenolpyruvate-binding site is contributed by 22-23 (KN). UDP-N-acetyl-alpha-D-glucosamine is bound at residue arginine 93. Cysteine 117 serves as the catalytic Proton donor. At cysteine 117 the chain carries 2-(S-cysteinyl)pyruvic acid O-phosphothioketal. Residues 122–126 (RPVDL), 162–165 (KVSV), aspartate 307, and isoleucine 329 each bind UDP-N-acetyl-alpha-D-glucosamine.

It belongs to the EPSP synthase family. MurA subfamily.

It is found in the cytoplasm. The catalysed reaction is phosphoenolpyruvate + UDP-N-acetyl-alpha-D-glucosamine = UDP-N-acetyl-3-O-(1-carboxyvinyl)-alpha-D-glucosamine + phosphate. It participates in cell wall biogenesis; peptidoglycan biosynthesis. Functionally, cell wall formation. Adds enolpyruvyl to UDP-N-acetylglucosamine. This is UDP-N-acetylglucosamine 1-carboxyvinyltransferase from Histophilus somni (strain 129Pt) (Haemophilus somnus).